The following is a 538-amino-acid chain: Chaperonin GroEL 1 (538 aa).

ATP contacts are provided by residues 29 to 32 (TLGP), 86 to 90 (DGTTT), Gly413, and Asp494.

This sequence belongs to the chaperonin (HSP60) family. As to quaternary structure, forms a cylinder of 14 subunits composed of two heptameric rings stacked back-to-back. Interacts with the co-chaperonin GroES.

The protein localises to the cytoplasm. It carries out the reaction ATP + H2O + a folded polypeptide = ADP + phosphate + an unfolded polypeptide.. In terms of biological role, together with its co-chaperonin GroES, plays an essential role in assisting protein folding. The GroEL-GroES system forms a nano-cage that allows encapsulation of the non-native substrate proteins and provides a physical environment optimized to promote and accelerate protein folding. The polypeptide is Chaperonin GroEL 1 (Mycolicibacterium paratuberculosis (strain ATCC BAA-968 / K-10) (Mycobacterium paratuberculosis)).